The sequence spans 72 residues: Light-harvesting polypeptide B-885 alpha-1 chain (72 aa).

Topologically, residues 1–16 (SAPAQWKLWLVMDPRT) are cytoplasmic. A helical transmembrane segment spans residues 17-37 (VMIGTAAWLGVLALLIHFLLL). His-33 contributes to the a bacteriochlorophyll binding site. The Periplasmic portion of the chain corresponds to 38-72 (GTERFNWIDTGLKEQKATAAAQAAITPAPVTAAAK).

This sequence belongs to the antenna complex alpha subunit family. In terms of assembly, the core complex is formed by different alpha and beta chains, binding bacteriochlorophyll molecules, and arranged most probably in tetrameric structures disposed around the reaction center. The non-pigmented gamma chains may constitute additional components.

The protein resides in the cell inner membrane. Antenna complexes are light-harvesting systems, which transfer the excitation energy to the reaction centers. The sequence is that of Light-harvesting polypeptide B-885 alpha-1 chain from Rhodocyclus tenuis (Rhodospirillum tenue).